A 562-amino-acid chain; its full sequence is mRNA cleavage and polyadenylation factor CLP1 (562 aa).

The interval 1 to 27 (MSLPGLELSQQPIEARRAPPQPTQISL) is disordered. ATP-binding positions include Glu-32, Lys-71, and 154-159 (DAGKTS). The disordered stretch occupies residues 415–483 (EDEYDPSKFD…STTPFTNLPS (69 aa)). Positions 445–479 (SLQPPSGLLPGLRSELPSATTGFPSASTSSTTPFT) are enriched in low complexity.

This sequence belongs to the Clp1 family. Clp1 subfamily. In terms of assembly, component of a pre-mRNA cleavage factor complex. Interacts directly with PCF11.

It is found in the nucleus. In terms of biological role, required for endonucleolytic cleavage during polyadenylation-dependent pre-mRNA 3'-end formation. The chain is mRNA cleavage and polyadenylation factor CLP1 from Coccidioides immitis (strain RS) (Valley fever fungus).